The primary structure comprises 245 residues: Homeobox protein Hox-A4a (245 aa).

Residues 34 to 99 (DYYERPKDPG…HGPRLTTESC (66 aa)) form a disordered region. Basic and acidic residues predominate over residues 35–51 (YYERPKDPGFPHHEEAS). 2 stretches are compositionally biased toward polar residues: residues 53–73 (PRSN…NDLN) and 82–99 (QPQS…TESC). An Antp-type hexapeptide motif is present at residues 126 to 131 (VYPWMK). Residues 147 to 206 (PKRSRTAYTRQQALELEKEFHFNRYLTRRRRVEIAHTMCLSERQVKIWFQNRRMKWKKDH) constitute a DNA-binding region (homeobox). Residues 205–245 (DHKLPNTKIRSSSSAPSNHHVKTDATQQQQTLLPTPCSSNL) form a disordered region. Residues 212–221 (KIRSSSSAPS) are compositionally biased toward polar residues. The segment covering 230–245 (TQQQQTLLPTPCSSNL) has biased composition (low complexity).

The protein belongs to the Antp homeobox family. Deformed subfamily.

The protein resides in the nucleus. Its function is as follows. Sequence-specific transcription factor which is part of a developmental regulatory system that provides cells with specific positional identities on the anterior-posterior axis. This Danio rerio (Zebrafish) protein is Homeobox protein Hox-A4a (hoxa4a).